A 522-amino-acid polypeptide reads, in one-letter code: E3 ubiquitin-protein ligase TRIM65 (522 aa).

Ala-2 is subject to N-acetylalanine. Residues 13 to 52 (CSICLGRYRDPVTLPCGHSFCGNCIQDSWRSCEKSCPECR) form an RING-type zinc finger. The segment at 92–134 (SHSARCLRHGRPLEFFCRTEGLCVCSACTVHDCSHHERALLDV) adopts a B box-type zinc-finger fold. Positions 141–229 (DQLRARVLVT…QRLTDHLRAL (89 aa)) form a coiled coil. At Ser-187 the chain carries Phosphoserine. Residues 316-509 (APVPSAVCPL…LTLCHQPEAT (194 aa)) enclose the B30.2/SPRY domain.

This sequence belongs to the TRIM/RBCC family. In terms of assembly, homo-multimerizes. Interacts with ARRDC4.

Its subcellular location is the cytoplasm. It catalyses the reaction S-ubiquitinyl-[E2 ubiquitin-conjugating enzyme]-L-cysteine + [acceptor protein]-L-lysine = [E2 ubiquitin-conjugating enzyme]-L-cysteine + N(6)-ubiquitinyl-[acceptor protein]-L-lysine.. It participates in protein modification; protein ubiquitination. Functionally, E3 ubiquitin ligase that plays a role in several processes including innate immnity, autophagy or inflammation. Negatively regulates miRNAs by modulating the ubiquitination and stability of TNRC6A, a protein involved in RNA-mediated gene silencing by both micro-RNAs (miRNAs) and short interfering RNAs. This ubiquitination results in the suppressed expression of miR-138-5p leading to increased autophagy. Upon enteroviral infection, promotes 'Lys-63'-mediated ubiquitination activation of IFIH1/MDA5 leading to innate signaling cascade. Mechanistically, selectively recognizes MDA5 filaments that occur on dsRNAs. Also plays a role in limitation of inflammation through different mechanisms. First, promotes 'Lys-48'-mediated ubiquitination of VCAM1 leading to its degradation and limitation of LPS-induced lung inflammation. In addition, negatively regulates inflammasome activation by promoting 'lys48'-linked ubiquitination of NLRP3 which is critical for the inhibition of NLRP3 inflammasome activation in resting macrophages. The sequence is that of E3 ubiquitin-protein ligase TRIM65 (Trim65) from Mus musculus (Mouse).